We begin with the raw amino-acid sequence, 358 residues long: MQLRSALMTGVARRTIFEPALTLSPEVVAWINDIAASRGPFQSRVGDKPLSVSMEGLVWQHESSAIPMFDCVWDLGGETVVLSLSRPLVEALVSTVQSGLAFPTEPTASLILELALEPLIARLEDKTNRTLHLLRVGKAITLAPYVELEIVIGPVSGKGRLFLFSPLDGLVPFAFRALAELLAQLPRQPRELSPELPVIIAGEIGTLRASAALLRKASVGDALLPDISPFGRGQIALSVGQLWTRADLEGDHLVLRGPFRPQSRPLECAHMTEIESQLRPSDADLDDIEIVLVFECGRWPISLGELRSAGDGHVFELGRPIDGLVDIVANGRCIGRGDIVRIGDDLGIRLRGRLACND.

The protein belongs to the FliN/MopA/SpaO family.

Functionally, could be involved in the secretion of an unknown factor. The sequence is that of Probable translocation protein Y4yK from Sinorhizobium fredii (strain NBRC 101917 / NGR234).